We begin with the raw amino-acid sequence, 318 residues long: Ankyrin repeat domain-containing protein 1 (318 aa).

The stretch at 37–77 forms a coiled coil; sequence ALEKQEDLKTTSKSLIELEEEKQIKEKQLKSELLKKKLEER. 6 ANK repeats span residues 118-147, 151-180, 184-213, 217-246, 250-279, and 283-314; these read VDQT…DPNT, YKRT…NIEF, LEST…AINA, LLST…DLHA, EGDT…DLNI, and AGKT…KNSH.

Its subcellular location is the nucleus. In terms of biological role, may act as a nuclear transcription factor that negatively regulates the expression of cardiac genes. This is Ankyrin repeat domain-containing protein 1 (ankrd1) from Xenopus tropicalis (Western clawed frog).